Reading from the N-terminus, the 570-residue chain is Dual specificity testis-specific protein kinase 2 (570 aa).

Positions 58–313 constitute a Protein kinase domain; it reads DFTREKIGSG…EIGKTLEEIM (256 aa). Residues 64-72 and K87 contribute to the ATP site; that span reads IGSGFFSEV. D176 functions as the Proton acceptor in the catalytic mechanism. S219 carries the post-translational modification Phosphoserine; by autocatalysis. Residues S369, S456, and S460 each carry the phosphoserine modification. The tract at residues 513-570 is disordered; sequence DCSNPQEENGFVPRPKGTSPCSGAASEEMEVEEERPRRAPVHFSISGISLQTQGEQDG. Residues 558 to 570 are compositionally biased toward polar residues; that stretch reads SGISLQTQGEQDG.

The protein belongs to the protein kinase superfamily. TKL Ser/Thr protein kinase family. It depends on Mg(2+) as a cofactor. Requires Mn(2+) as cofactor. Predominantly expressed in testis and prostate. Found predominantly in non-germinal Sertoli cells.

The protein localises to the nucleus. It carries out the reaction L-seryl-[protein] + ATP = O-phospho-L-seryl-[protein] + ADP + H(+). The enzyme catalyses L-threonyl-[protein] + ATP = O-phospho-L-threonyl-[protein] + ADP + H(+). The catalysed reaction is L-tyrosyl-[protein] + ATP = O-phospho-L-tyrosyl-[protein] + ADP + H(+). Activated by autophosphorylation on Ser-219. Functionally, dual specificity protein kinase activity catalyzing autophosphorylation and phosphorylation of exogenous substrates on both serine/threonine and tyrosine residues. Phosphorylates cofilin at 'Ser-3'. May play an important role in spermatogenesis. This is Dual specificity testis-specific protein kinase 2 (Tesk2) from Rattus norvegicus (Rat).